The chain runs to 366 residues: Ribosomal RNA large subunit methyltransferase M (366 aa).

S-adenosyl-L-methionine-binding positions include Ser-188, 221–224 (CPGG), Asp-240, Asp-260, and Asp-277. The active-site Proton acceptor is Lys-306.

Belongs to the class I-like SAM-binding methyltransferase superfamily. RNA methyltransferase RlmE family. RlmM subfamily. Monomer.

It is found in the cytoplasm. It carries out the reaction cytidine(2498) in 23S rRNA + S-adenosyl-L-methionine = 2'-O-methylcytidine(2498) in 23S rRNA + S-adenosyl-L-homocysteine + H(+). Its function is as follows. Catalyzes the 2'-O-methylation at nucleotide C2498 in 23S rRNA. In Shigella flexneri serotype 5b (strain 8401), this protein is Ribosomal RNA large subunit methyltransferase M.